Reading from the N-terminus, the 500-residue chain is Cytochrome P450 2D15 (500 aa).

Cys-446 contributes to the heme binding site.

The protein belongs to the cytochrome P450 family. The cofactor is heme. As to expression, liver. Also detected in several other tissues.

The protein localises to the endoplasmic reticulum membrane. The protein resides in the microsome membrane. The catalysed reaction is an organic molecule + reduced [NADPH--hemoprotein reductase] + O2 = an alcohol + oxidized [NADPH--hemoprotein reductase] + H2O + H(+). High activity for the hydroxylation of bunitrolol and imipramine; low activity on debrisoquine. The protein is Cytochrome P450 2D15 (CYP2D15) of Canis lupus familiaris (Dog).